An 801-amino-acid polypeptide reads, in one-letter code: Na(+)/H(+) antiporter subunit A1 (801 aa).

19 helical membrane-spanning segments follow: residues 1–21 (MSLL…IPIL), 28–48 (IHLG…MLTL), 79–99 (LGLL…LYSI), 117–137 (LFMG…LYLF), 166–186 (LIIT…LAIP), 206–226 (PFFI…SAQF), 265–285 (IFAA…ITLF), 300–320 (ILAF…GIGA), 337–357 (FTAA…LFMI), 373–393 (LGGL…TALS), 427–447 (LGYL…VYSI), 472–492 (ILML…GLFP), 522–542 (GLTP…LLIV), 591–611 (LVII…SVPF), 623–643 (IFEV…LFAK), 646–666 (LFNI…FIFF), 671–691 (LALT…LCFY), 707–727 (LTNA…GLIA), and 764–784 (MDTL…YTMI).

Belongs to the CPA3 antiporters (TC 2.A.63) subunit A family. May form a heterooligomeric complex that consists of seven subunits: mnhA1, mnhB1, mnhC1, mnhD1, mnhE1, mnhF1 and mnhG1.

It localises to the cell membrane. Its function is as follows. Mnh complex is a Na(+)/H(+) antiporter involved in Na(+) excretion. This is Na(+)/H(+) antiporter subunit A1 (mnhA1) from Staphylococcus aureus (strain bovine RF122 / ET3-1).